Here is a 367-residue protein sequence, read N- to C-terminus: DNA replication and repair protein RecF (367 aa).

30 to 37 (GANGSGKT) lines the ATP pocket.

Belongs to the RecF family.

It localises to the cytoplasm. Functionally, the RecF protein is involved in DNA metabolism; it is required for DNA replication and normal SOS inducibility. RecF binds preferentially to single-stranded, linear DNA. It also seems to bind ATP. This is DNA replication and repair protein RecF from Pseudomonas syringae pv. tomato (strain ATCC BAA-871 / DC3000).